We begin with the raw amino-acid sequence, 473 residues long: Envelope glycoprotein M (473 aa).

Topologically, residues 1 to 32 are intravirion; the sequence is MGRPAPRGSPDSAPPTKGMTGARTAWWVWCVQ. Residues 33-53 traverse the membrane as a helical segment; it reads VATFVVSAVCVTGLLVLASVF. At 54–90 the chain is on the virion surface side; it reads RARFPCFYATASSYAGVNSTAEVRGGVAVPLRLDTQS. Residues 91-111 form a helical membrane-spanning segment; the sequence is LVGTYVITAVLLLAVAVYAVV. Topologically, residues 112 to 137 are intravirion; it reads GAVTSRYDRALDAGRRLAAARMAMPH. Residues 138–158 form a helical membrane-spanning segment; the sequence is ATLIAGNVCSWLLQITVLLLA. Over 159–163 the chain is Virion surface; that stretch reads HRISQ. The helical transmembrane segment at 164–184 threads the bilayer; it reads LAHLVYVLHFACLVYFAAHFC. Residues 185–216 are Intravirion-facing; it reads TRGVLSGTYLRQVHGLMELAPTHHRVVGPARA. The chain crosses the membrane as a helical span at residues 217–237; the sequence is VLTNALLLGVFLCTADAAVSL. The Virion surface portion of the chain corresponds to 238 to 250; sequence NTIAAFNFNFSAP. The chain crosses the membrane as a helical span at residues 251–271; sequence GMLICLTVLFAILVVSLLLVV. The Intravirion portion of the chain corresponds to 272-280; the sequence is EGVLCHYVR. The helical transmembrane segment at 281–301 threads the bilayer; it reads VLVGPHLGAVAATGIVGLACE. Residues 302–318 lie on the Virion surface side of the membrane; that stretch reads HYYTNGYYVVETQWPGA. A helical transmembrane segment spans residues 319-339; sequence QTGVRVALALVAAFALGMAVL. The Intravirion portion of the chain corresponds to 340–473; it reads RCTRAYLYHR…DPVYSTVRRW (134 aa). Disordered stretches follow at residues 371–399 and 440–473; these read KRVRSSMRGSRDGRHRPAPGSPPGIPEYA and HPRHLPDDDPIYDTVGGYDPEPAEDPVYSTVRRW.

This sequence belongs to the herpesviridae glycoprotein M family. Interacts (via N-terminus) with gN (via N-terminus). The gM-gN heterodimer forms the gCII complex.

The protein localises to the virion membrane. It localises to the host Golgi apparatus. The protein resides in the host trans-Golgi network. It is found in the host endosome membrane. Its subcellular location is the host nucleus inner membrane. Its function is as follows. Envelope glycoprotein important for virion assembly and egress. Plays a role in the correct incorporation of gH-gL into virion membrane. Directs the glycoprotein N (gN) to the host trans-Golgi network. This Human herpesvirus 1 (strain 17) (HHV-1) protein is Envelope glycoprotein M.